Reading from the N-terminus, the 504-residue chain is Maturase K (504 aa).

It belongs to the intron maturase 2 family. MatK subfamily.

It is found in the plastid. The protein localises to the chloroplast. In terms of biological role, usually encoded in the trnK tRNA gene intron. Probably assists in splicing its own and other chloroplast group II introns. This Hamamelis mollis (Chinese witch hazel) protein is Maturase K.